A 102-amino-acid chain; its full sequence is NADH-quinone oxidoreductase subunit K (102 aa).

A run of 3 helical transmembrane segments spans residues 6–26 (MHHGLLLAAILFALGMIGILV), 30–50 (LIFILMSIEIMLNAAGLAFVV), and 64–84 (FIFILSVAAAEVSVGLALLLL).

It belongs to the complex I subunit 4L family. NDH-1 is composed of 14 different subunits. Subunits NuoA, H, J, K, L, M, N constitute the membrane sector of the complex.

Its subcellular location is the cell inner membrane. It carries out the reaction a quinone + NADH + 5 H(+)(in) = a quinol + NAD(+) + 4 H(+)(out). In terms of biological role, NDH-1 shuttles electrons from NADH, via FMN and iron-sulfur (Fe-S) centers, to quinones in the respiratory chain. The immediate electron acceptor for the enzyme in this species is believed to be ubiquinone. Couples the redox reaction to proton translocation (for every two electrons transferred, four hydrogen ions are translocated across the cytoplasmic membrane), and thus conserves the redox energy in a proton gradient. This Nitrosospira multiformis (strain ATCC 25196 / NCIMB 11849 / C 71) protein is NADH-quinone oxidoreductase subunit K.